The following is a 186-amino-acid chain: Peptide deformylase (186 aa).

Positions 99 and 141 each coordinate Fe cation. The active site involves Glu142. His145 provides a ligand contact to Fe cation.

This sequence belongs to the polypeptide deformylase family. The cofactor is Fe(2+).

It catalyses the reaction N-terminal N-formyl-L-methionyl-[peptide] + H2O = N-terminal L-methionyl-[peptide] + formate. In terms of biological role, removes the formyl group from the N-terminal Met of newly synthesized proteins. Requires at least a dipeptide for an efficient rate of reaction. N-terminal L-methionine is a prerequisite for activity but the enzyme has broad specificity at other positions. The polypeptide is Peptide deformylase (Chlamydia caviae (strain ATCC VR-813 / DSM 19441 / 03DC25 / GPIC) (Chlamydophila caviae)).